The following is a 203-amino-acid chain: GTP-binding protein YPTC1 (203 aa).

Residues 15–23, 33–40, 63–67, 121–124, and 151–153 each bind GTP; these read GDSGVGKSC, YTESYIST, DTAGQ, NKSD, and SAK. The Effector region signature appears at 37 to 45; it reads YISTIGVDF. The interval 174 to 203 is disordered; that stretch reads ASQPIPTKAGGPVVRPQEGKPINSKSSSCC. S-geranylgeranyl cysteine attachment occurs at residues Cys-202 and Cys-203.

Belongs to the small GTPase superfamily. Rab family.

It localises to the cell membrane. Its function is as follows. Protein transport. Probably involved in vesicular traffic. This is GTP-binding protein YPTC1 (YPTC1) from Chlamydomonas reinhardtii (Chlamydomonas smithii).